The following is a 453-amino-acid chain: Bifunctional protein GlmU (453 aa).

Positions 1–231 (MERTCLAIIL…EVEMTGCNNR (231 aa)) are pyrophosphorylase. UDP-N-acetyl-alpha-D-glucosamine contacts are provided by residues 10–13 (LAAG), lysine 24, glutamine 77, 82–83 (GT), 105–107 (YGD), glycine 143, glutamate 157, asparagine 172, and asparagine 229. Aspartate 107 serves as a coordination point for Mg(2+). Asparagine 229 is a Mg(2+) binding site. Residues 232 to 252 (AELAFIERLWQERRRHELMLS) are linker. Residues 253 to 453 (GVTMIAPETV…AIKAAKKGSH (201 aa)) are N-acetyltransferase. Residues arginine 318 and lysine 336 each contribute to the UDP-N-acetyl-alpha-D-glucosamine site. Histidine 348 acts as the Proton acceptor in catalysis. The UDP-N-acetyl-alpha-D-glucosamine site is built by tyrosine 351 and asparagine 362. Acetyl-CoA-binding positions include alanine 365, 371 to 372 (NY), serine 390, serine 408, and arginine 425.

This sequence in the N-terminal section; belongs to the N-acetylglucosamine-1-phosphate uridyltransferase family. The protein in the C-terminal section; belongs to the transferase hexapeptide repeat family. As to quaternary structure, homotrimer. Mg(2+) serves as cofactor.

It localises to the cytoplasm. It catalyses the reaction alpha-D-glucosamine 1-phosphate + acetyl-CoA = N-acetyl-alpha-D-glucosamine 1-phosphate + CoA + H(+). The enzyme catalyses N-acetyl-alpha-D-glucosamine 1-phosphate + UTP + H(+) = UDP-N-acetyl-alpha-D-glucosamine + diphosphate. The protein operates within nucleotide-sugar biosynthesis; UDP-N-acetyl-alpha-D-glucosamine biosynthesis; N-acetyl-alpha-D-glucosamine 1-phosphate from alpha-D-glucosamine 6-phosphate (route II): step 2/2. Its pathway is nucleotide-sugar biosynthesis; UDP-N-acetyl-alpha-D-glucosamine biosynthesis; UDP-N-acetyl-alpha-D-glucosamine from N-acetyl-alpha-D-glucosamine 1-phosphate: step 1/1. It participates in bacterial outer membrane biogenesis; LPS lipid A biosynthesis. In terms of biological role, catalyzes the last two sequential reactions in the de novo biosynthetic pathway for UDP-N-acetylglucosamine (UDP-GlcNAc). The C-terminal domain catalyzes the transfer of acetyl group from acetyl coenzyme A to glucosamine-1-phosphate (GlcN-1-P) to produce N-acetylglucosamine-1-phosphate (GlcNAc-1-P), which is converted into UDP-GlcNAc by the transfer of uridine 5-monophosphate (from uridine 5-triphosphate), a reaction catalyzed by the N-terminal domain. The sequence is that of Bifunctional protein GlmU from Rhizobium rhizogenes (strain K84 / ATCC BAA-868) (Agrobacterium radiobacter).